The primary structure comprises 328 residues: Ribosomal RNA small subunit methyltransferase H (328 aa).

S-adenosyl-L-methionine is bound by residues 35 to 37 (GSH), Asp60, Phe87, Asp113, and Gln120.

It belongs to the methyltransferase superfamily. RsmH family.

The protein resides in the cytoplasm. It carries out the reaction cytidine(1402) in 16S rRNA + S-adenosyl-L-methionine = N(4)-methylcytidine(1402) in 16S rRNA + S-adenosyl-L-homocysteine + H(+). Specifically methylates the N4 position of cytidine in position 1402 (C1402) of 16S rRNA. The sequence is that of Ribosomal RNA small subunit methyltransferase H from Chlorobium chlorochromatii (strain CaD3).